Here is a 362-residue protein sequence, read N- to C-terminus: Notoamide biosynthesis cluster protein J' (362 aa).

A signal peptide spans 1–22 (MRNMATMLHLLTLILLTSPAST). N-linked (GlcNAc...) asparagine glycans are attached at residues asparagine 157, asparagine 190, asparagine 280, and asparagine 338.

Its function is as follows. Part of the gene cluster that mediates the biosynthesis of notoamide, a fungal indole alkaloid that belongs to a family of natural products containing a characteristic bicyclo[2.2.2]diazaoctane core. The first step of notoamide biosynthesis involves coupling of L-proline and L-tryptophan by the bimodular NRPS notE', to produce cyclo-L-tryptophan-L-proline called brevianamide F. The reverse prenyltransferase notF' then acts as a deoxybrevianamide E synthase and converts brevianamide F to deoxybrevianamide E via reverse prenylation at C-2 of the indole ring leading to the bicyclo[2.2.2]diazaoctane core. Deoxybrevianamide E is further hydroxylated at C-6 of the indole ring, likely catalyzed by the cytochrome P450 monooxygenase notG', to yield 6-hydroxy-deoxybrevianamide E. 6-hydroxy-deoxybrevianamide E is a specific substrate of the prenyltransferase notC' for normal prenylation at C-7 to produce 6-hydroxy-7-prenyl-deoxybrevianamide, also called notoamide S. As the proposed pivotal branching point in notoamide biosynthesis, notoamide S can be diverted to notoamide E through an oxidative pyran ring closure putatively catalyzed by either notH' cytochrome P450 monooxygenase or the notD' FAD-linked oxidoreductase. This step would be followed by an indole 2,3-epoxidation-initiated pinacol-like rearrangement catalyzed by the notB' FAD-dependent monooxygenase leading to the formation of notoamide C and notoamide D. On the other hand notoamide S is converted to notoamide T by notH' (or notD'), a bifunctional oxidase that also functions as the intramolecular Diels-Alderase responsible for generation of (-)-notoamide T. To generate antipodal (+)-notoaminide T, notH (or notD) in Aspergillus strain MF297-2 is expected to catalyze a Diels-Alder reaction leading to the opposite stereochemistry. The remaining oxidoreductase notD' (or notH') likely catalyzes the oxidative pyran ring formation to yield (-)-stephacidin A. The FAD-dependent monooxygenase notI' is highly similar to notB' and is predicted to catalyze a similar conversion from (-)-stephacidin A to (+)-notoamide B via the 2,3-epoxidation of (-)-stephacidin A followed by a pinacol-type rearrangement. Finally, it remains unclear which enzyme could be responsible for the final hydroxylation steps leading to notoamide A and sclerotiamide. The function of notJ' in the notoamide biosynthesis has not been determined yet. In Aspergillus versicolor, this protein is Notoamide biosynthesis cluster protein J'.